Here is a 232-residue protein sequence, read N- to C-terminus: Triosephosphate isomerase (232 aa).

6–8 (NFK) contributes to the substrate binding site. Catalysis depends on His86, which acts as the Electrophile. The Proton acceptor role is filled by Glu155. Substrate-binding residues include Gly161 and Ser191.

Belongs to the triosephosphate isomerase family. As to quaternary structure, homodimer.

Its subcellular location is the cytoplasm. The enzyme catalyses D-glyceraldehyde 3-phosphate = dihydroxyacetone phosphate. It functions in the pathway carbohydrate biosynthesis; gluconeogenesis. Its pathway is carbohydrate degradation; glycolysis; D-glyceraldehyde 3-phosphate from glycerone phosphate: step 1/1. Its function is as follows. Involved in the gluconeogenesis. Catalyzes stereospecifically the conversion of dihydroxyacetone phosphate (DHAP) to D-glyceraldehyde-3-phosphate (G3P). The chain is Triosephosphate isomerase from Nitratiruptor sp. (strain SB155-2).